An 829-amino-acid polypeptide reads, in one-letter code: Disintegrin and metalloproteinase domain-containing protein 23 (829 aa).

The signal sequence occupies residues 1–55 (MKPPGSISRRPTLTGCSLPGASCGPGRCPAGPVPARAPPCRLLLVLLLLPALATS). Residues 56–283 (SRPRARGAAA…ELQWLRRRKR (228 aa)) constitute a propeptide that is removed on maturation. N-linked (GlcNAc...) asparagine glycosylation is found at N72, N92, N97, and N260. Residues 284–789 (AVNPSRGVFE…EGPKGPSATN (506 aa)) are Extracellular-facing. One can recognise a Peptidase M12B domain in the interval 296–493 (KYLELMIVND…GGGACLFNRP (198 aa)). 3 disulfide bridges follow: C405–C488, C447–C472, and C449–C456. A Disintegrin domain is found at 499 to 585 (PTECGNGYVE…QCPPNLHKQD (87 aa)). N544 and N545 each carry an N-linked (GlcNAc...) asparagine glycan. Cysteines 557 and 577 form a disulfide. N-linked (GlcNAc...) asparagine glycans are attached at residues N661 and N729. One can recognise an EGF-like domain in the interval 729–766 (NMSSCPLDSRGKVCSGHGVCSNEATCICDFTWAGTDCS). Cystine bridges form between C733–C748, C742–C754, and C756–C765. The chain crosses the membrane as a helical span at residues 790–810 (LIIGSIAGAILVAAIVLGGTG). Topologically, residues 811 to 829 (WGFKNVKKRRFDPTQQGPI) are cytoplasmic.

As to quaternary structure, can bind to LGI1 and LGI4. Brain specific.

It is found in the cell membrane. The protein resides in the secreted. In terms of biological role, may play a role in cell-cell and cell-matrix interactions. This is a non-catalytic metalloprotease-like protein. This is Disintegrin and metalloproteinase domain-containing protein 23 (Adam23) from Mus musculus (Mouse).